We begin with the raw amino-acid sequence, 1054 residues long: MRFKSVFTLLPLLAQLPSGGASLPNNHGRVENCVRNHDGIHKFRHSNNTYQSMFPGVTWDEDQWVLTTSSLDQGHYQSRGSVANGYIGISVSSVGPFFELDLPVAGDVINGWPLYSRRQSFATISGFFDIQAETNGSNFPWMNQYGGESVISGVPHWSGLILDLGDDDYLDSTVDNVTLSDFKSSYDFKAGVLSWSYTWTPAGDKGSYAITYRLFANKLNVNQAVVDMEITPSQDGHATIVNVLDGYSAVRTDFVESQEDDGAIYSAVRPWGIPDVSAYFYANITGSKHVDLSSRRLIHGKPYVSANESSIAQAADVNFVANEKVRITKFVGAASTDAFPDPQATAKRAVSEALDAGYQRSLRSHVQEWASIMHEDSVDRYVNPTTGKLPDDDNIINSAIIAVANTYYLLQNTVGKNAIRAAQDAPLNVNSFSVGGLVSDSYAGLVFWDADVWMQPGLVASHPEAAQAVTNYRTKLYPQAKKNIETTYTGSKNATYIDPSAAIYPWTSGRFGNCTGTGACWDYQYHLNGDIGLSLIYQWVVSGDTNTFREKHFPIYDSVAALYGSIVERNGSYWTLTNMTDPDEYANHIDAGGFTMPMISETLEYANQFRQQFGLEPNETWTEISENVLVLRENGVTLEYTTMNGTAAVKQADIVLVTYPLVYDNYTAETALTDLDYYANRQSADGPAMTWAIFSIAAGAVSPSGCSAYTYHQYSYAPYARAPFFQLSEQMLDNASINGGTHPAYPFLTGHGGANQVVLFGYLGLRLLPDDAIHIEPNLPPQIPYVKYRTFYWRGWPISAQSNYTHTVLQRSQSAPLDTADRRFANTSIPVFVGLADNATLHHLPPHGPLTVRNREIGTINTIEDNLIQCSPVSSTDAFEQGQFPISVVDGATSTRWQPSSSNASAVTVNLGSTTGRSVQTVASGFHFDWAAAPPVNASVIFHDTPLSDPVAALSSPGPHVRIVANLTNIEQSGPYDPEATDLNEIKIPVGNTTRIELAQEVPVGRYATLVISGNQALAQADGEDHVGATVAEWAILGPKSGSPRRRIQPVPLL.

Residues 1–21 (MRFKSVFTLLPLLAQLPSGGA) form the signal peptide. 5 N-linked (GlcNAc...) asparagine glycosylation sites follow: N47, N135, N176, N283, and N307. 448 to 449 (WD) provides a ligand contact to substrate. N-linked (GlcNAc...) asparagine glycans are attached at residues N493, N513, N570, and N578. The active-site Proton donor is E584. 2 N-linked (GlcNAc...) asparagine glycosylation sites follow: N618 and N644. 650 to 651 (KQ) contributes to the substrate binding site. 9 N-linked (GlcNAc...) asparagine glycosylation sites follow: N665, N734, N803, N826, N838, N903, N937, N966, and N992.

It belongs to the glycosyl hydrolase 65 family.

It carries out the reaction alpha,alpha-trehalose + H2O = alpha-D-glucose + beta-D-glucose. The chain is Acid trehalase (treA) from Emericella nidulans (strain FGSC A4 / ATCC 38163 / CBS 112.46 / NRRL 194 / M139) (Aspergillus nidulans).